The following is a 142-amino-acid chain: Transcriptional regulator MraZ (142 aa).

SpoVT-AbrB domains lie at 5–51 (ASAL…PRPE) and 77–120 (AADV…DAAT).

This sequence belongs to the MraZ family. In terms of assembly, forms oligomers.

Its subcellular location is the cytoplasm. It localises to the nucleoid. This is Transcriptional regulator MraZ from Cupriavidus pinatubonensis (strain JMP 134 / LMG 1197) (Cupriavidus necator (strain JMP 134)).